We begin with the raw amino-acid sequence, 227 residues long: 2,3-bisphosphoglycerate-dependent phosphoglycerate mutase (227 aa).

Residues 7 to 14, 20 to 21, Arg-59, 86 to 89, Lys-97, 113 to 114, and 182 to 183 contribute to the substrate site; these read RHGFSEWN, TG, ERHY, RR, and GN. The Tele-phosphohistidine intermediate role is filled by His-8. Glu-86 (proton donor/acceptor) is an active-site residue.

It belongs to the phosphoglycerate mutase family. BPG-dependent PGAM subfamily. As to quaternary structure, homodimer.

The enzyme catalyses (2R)-2-phosphoglycerate = (2R)-3-phosphoglycerate. It functions in the pathway carbohydrate degradation; glycolysis; pyruvate from D-glyceraldehyde 3-phosphate: step 3/5. Functionally, catalyzes the interconversion of 2-phosphoglycerate and 3-phosphoglycerate. This Haemophilus influenzae (strain ATCC 51907 / DSM 11121 / KW20 / Rd) protein is 2,3-bisphosphoglycerate-dependent phosphoglycerate mutase.